Consider the following 201-residue polypeptide: 3-isopropylmalate dehydratase small subunit (201 aa).

The protein belongs to the LeuD family. LeuD type 1 subfamily. Heterodimer of LeuC and LeuD.

The enzyme catalyses (2R,3S)-3-isopropylmalate = (2S)-2-isopropylmalate. The protein operates within amino-acid biosynthesis; L-leucine biosynthesis; L-leucine from 3-methyl-2-oxobutanoate: step 2/4. Its function is as follows. Catalyzes the isomerization between 2-isopropylmalate and 3-isopropylmalate, via the formation of 2-isopropylmaleate. This Jannaschia sp. (strain CCS1) protein is 3-isopropylmalate dehydratase small subunit.